The primary structure comprises 197 residues: Phosphoheptose isomerase (197 aa).

The SIS domain maps to 34–196; that stretch reads MVQCLLGGNK…DRTLFPQDDQ (163 aa). 49–51 lines the substrate pocket; sequence NGG. Zn(2+)-binding residues include His58 and Glu62. Residues Glu62, 91–92, 117–119, Ser122, and Gln172 contribute to the substrate site; these read ND and STS. Positions 172 and 180 each coordinate Zn(2+).

This sequence belongs to the SIS family. GmhA subfamily. In terms of assembly, homotetramer. Requires Zn(2+) as cofactor.

It is found in the cytoplasm. The catalysed reaction is 2 D-sedoheptulose 7-phosphate = D-glycero-alpha-D-manno-heptose 7-phosphate + D-glycero-beta-D-manno-heptose 7-phosphate. The protein operates within carbohydrate biosynthesis; D-glycero-D-manno-heptose 7-phosphate biosynthesis; D-glycero-alpha-D-manno-heptose 7-phosphate and D-glycero-beta-D-manno-heptose 7-phosphate from sedoheptulose 7-phosphate: step 1/1. Functionally, catalyzes the isomerization of sedoheptulose 7-phosphate in D-glycero-D-manno-heptose 7-phosphate. The polypeptide is Phosphoheptose isomerase (Shewanella loihica (strain ATCC BAA-1088 / PV-4)).